The primary structure comprises 79 residues: uncharacterized protein (79 aa).

This is an uncharacterized protein from Homo sapiens (Human).